A 308-amino-acid polypeptide reads, in one-letter code: 4-hydroxyproline 2-epimerase (308 aa).

Residue cysteine 88 is the Proton acceptor of the active site. Residues 89–90, histidine 208, and aspartate 232 contribute to the substrate site; that span reads GH. Cysteine 236 (proton donor) is an active-site residue. 237–238 contacts substrate; that stretch reads GT.

This sequence belongs to the proline racemase family.

It carries out the reaction trans-4-hydroxy-L-proline = cis-4-hydroxy-D-proline. In terms of biological role, catalyzes the epimerization of trans-4-hydroxy-L-proline (t4LHyp) to cis-4-hydroxy-D-proline (c4DHyp). Is likely involved in a degradation pathway that converts t4LHyp to alpha-ketoglutarate. Can also catalyze the epimerization of trans-3-hydroxy-L-proline (t3LHyp) to cis-3-hydroxy-D-proline (c3DHyp), albeit with 19-fold lower efficiency. Displays no proline racemase activity. The polypeptide is 4-hydroxyproline 2-epimerase (Chromobacterium violaceum (strain ATCC 12472 / DSM 30191 / JCM 1249 / CCUG 213 / NBRC 12614 / NCIMB 9131 / NCTC 9757 / MK)).